The following is a 351-amino-acid chain: Phenylalanine--tRNA ligase alpha subunit (351 aa).

The interval L45 to A69 is disordered. Residue E269 participates in Mg(2+) binding.

It belongs to the class-II aminoacyl-tRNA synthetase family. Phe-tRNA synthetase alpha subunit type 1 subfamily. In terms of assembly, tetramer of two alpha and two beta subunits. Mg(2+) serves as cofactor.

It is found in the cytoplasm. The enzyme catalyses tRNA(Phe) + L-phenylalanine + ATP = L-phenylalanyl-tRNA(Phe) + AMP + diphosphate + H(+). The polypeptide is Phenylalanine--tRNA ligase alpha subunit (Corynebacterium jeikeium (strain K411)).